The chain runs to 207 residues: Outer-membrane lipoprotein LolB (207 aa).

The signal sequence occupies residues 1 to 21 (MPMRKRHFYRLLPLASLLLAA). A lipid anchor (N-palmitoyl cysteine) is attached at Cys22. Cys22 carries the S-diacylglycerol cysteine lipid modification.

It belongs to the LolB family. In terms of assembly, monomer.

It is found in the cell outer membrane. Functionally, plays a critical role in the incorporation of lipoproteins in the outer membrane after they are released by the LolA protein. In Yersinia pseudotuberculosis serotype IB (strain PB1/+), this protein is Outer-membrane lipoprotein LolB.